Reading from the N-terminus, the 93-residue chain is YcgL domain-containing protein VSAL_I1068 (93 aa).

The YcgL domain occupies 1–84 (MYCSIYKSSK…PPENLLEKYK (84 aa)).

This is YcgL domain-containing protein VSAL_I1068 from Aliivibrio salmonicida (strain LFI1238) (Vibrio salmonicida (strain LFI1238)).